Here is a 345-residue protein sequence, read N- to C-terminus: Anthranilate phosphoribosyltransferase (345 aa).

Residues glycine 84, 87 to 88 (GD), threonine 92, 94 to 97 (NIST), 112 to 120 (KHGGRSVSS), and serine 124 each bind 5-phospho-alpha-D-ribose 1-diphosphate. An anthranilate-binding site is contributed by glycine 84. A Mg(2+)-binding site is contributed by serine 96. Arginine 170 is an anthranilate binding site. Mg(2+) contacts are provided by aspartate 229 and glutamate 230.

The protein belongs to the anthranilate phosphoribosyltransferase family. Homodimer. The cofactor is Mg(2+).

The catalysed reaction is N-(5-phospho-beta-D-ribosyl)anthranilate + diphosphate = 5-phospho-alpha-D-ribose 1-diphosphate + anthranilate. Its pathway is amino-acid biosynthesis; L-tryptophan biosynthesis; L-tryptophan from chorismate: step 2/5. In terms of biological role, catalyzes the transfer of the phosphoribosyl group of 5-phosphorylribose-1-pyrophosphate (PRPP) to anthranilate to yield N-(5'-phosphoribosyl)-anthranilate (PRA). This chain is Anthranilate phosphoribosyltransferase, found in Leptothrix cholodnii (strain ATCC 51168 / LMG 8142 / SP-6) (Leptothrix discophora (strain SP-6)).